Consider the following 491-residue polypeptide: Glucose-6-phosphate exchanger SLC37A2 (491 aa).

The helical transmembrane segment at 5–25 (LAPGIWYRAFILLITFLIYTC) threads the bilayer. Residues Asn-43, Asn-52, and Asn-58 are each glycosylated (N-linked (GlcNAc...) asparagine). Transmembrane regions (helical) follow at residues 78-98 (GAVD…SGIF), 108-130 (LTAG…FWNI), 132-154 (VLWY…WPAV), 169-189 (LIMG…SLLA), and 200-220 (SFVV…FFLI). The tract at residues 229 to 257 (SPPQHHGNPEESQDQPEDPANGPSCNKES) is disordered. Transmembrane regions (helical) follow at residues 292–312 (LCLL…PLYI), 328–348 (TLFD…SDYI), 352–372 (ATTC…YNHV), 377–397 (IGIS…PYAL), 424–444 (AIID…AGLI), and 452–472 (VFYM…RLVY).

The protein belongs to the major facilitator superfamily. Organophosphate:Pi antiporter (OPA) (TC 2.A.1.4) family.

It localises to the endoplasmic reticulum membrane. It catalyses the reaction D-glucose 6-phosphate(in) + phosphate(out) = D-glucose 6-phosphate(out) + phosphate(in). Its activity is regulated as follows. Inhibited by vanadate but not by chlorogenic acid. Inorganic phosphate and glucose-6-phosphate antiporter. May transport cytoplasmic glucose-6-phosphate into the lumen of the endoplasmic reticulum and translocate inorganic phosphate into the opposite direction. Independent of a lumenal glucose-6-phosphatase. May not play a role in homeostatic regulation of blood glucose levels. This Bos taurus (Bovine) protein is Glucose-6-phosphate exchanger SLC37A2.